The following is a 181-amino-acid chain: MELLKVIKSQDKITLKTEKVNKNVFFYFKNKKKILLKITFSGELFLKERTLITLNNLNYSNYSNYIKFMAKNLETFFYDQYNYFSKLHMIGLGFKNFILRKHLYILVGDCNYIIFRIPDSLKIFCKKNQVFILGESNVEIFNFMSNIKRVKKSNFYKGKGVLQFKNFKFTKLKVGKKQRFM.

This sequence belongs to the universal ribosomal protein uL6 family.

The protein localises to the mitochondrion. In Acanthamoeba castellanii (Amoeba), this protein is Large ribosomal subunit protein uL6m (RPL6).